Consider the following 195-residue polypeptide: Ephrin-A2 (195 aa).

The signal sequence occupies residues 1–16 (MELSLVVFTVVCWVSV). The Ephrin RBD domain maps to 24 to 157 (SDRHAVYWNS…KLKVYVKPTS (134 aa)). A glycan (N-linked (GlcNAc...) asparagine) is linked at Asn-32. Intrachain disulfides connect Cys-57–Cys-97 and Cys-85–Cys-146. Cys-174 carries the GPI-anchor amidated cysteine lipid modification. A propeptide spans 175–195 (GADGPCLAVLMLLLVFLLAGV) (removed in mature form).

The protein belongs to the ephrin family. In terms of assembly, binds to the receptor tyrosine kinases epha2, epha3, epha4 and epha5. Interacts with epha8; activates epha8. Widespread expression in the embryo.

It is found in the cell membrane. Its function is as follows. Cell surface GPI-bound ligand for Eph receptors, a family of receptor tyrosine kinases which are crucial for migration, repulsion and adhesion during neuronal, vascular and epithelial development. Binds promiscuously Eph receptors residing on adjacent cells, leading to contact-dependent bidirectional signaling into neighboring cells. The signaling pathway downstream of the receptor is referred to as forward signaling while the signaling pathway downstream of the ephrin ligand is referred to as reverse signaling. With the epha2 receptor may play a role in bone remodeling through regulation of osteoclastogenesis and osteoblastogenesis. In Danio rerio (Zebrafish), this protein is Ephrin-A2 (efna2).